The chain runs to 1082 residues: MSAAPAYSEDKGGSAGPGEPEYGHDPASGGIFSSDYKRHDDLKEMLDTNKDSLKLEAMKRIVAMIARGKNASDLFPAVVKNVACKNIEVKKLVYVYLVRYAEEQQDLALLSISTFQRGLKDPNQLIRASALRVLSSIRVPIIVPIMMLAIKEAASDMSPYVRKTAAHAIPKLYSLDSDQKDQLIEVIEKLLADKTTLVAGSVVMAFEEVCPERIDLIHKNYRKLCNLLIDVEEWGQVVIISMLTRYARTQFLSPTQNESLLEENPEKAFYGSEEDEAKGPGSEEAATAALPARKPYVMDPDHRLLLRNTKPLLQSRSAAVVMAVAQLYFHLAPKAEVGVIAKALVRLLRSHSEVQYVVLQNVATMSIKRRGMFEPYLKSFYIRSTDPTQIKILKLEVLTNLANETNIPTVLREFQTYIRSMDKDFVAATIQAIGRCATNIGRVRDTCLNGLVQLLSNRDELVVAESVVVIKKLLQMQPAQHGEIIKHLAKLTDNIQVPMARASILWLIGEYCEHVPKIAPDVLRKMAKSFTAEEDIVKLQVINLAAKLYLTNSKQTKLLTQYVLSLAKYDQNYDIRDRARFTRQLIVPSEQGGALSRHAKKLFLAPKPAPILESSFKDRDHFQLGSLSHLLNAKATGYQELPDWPEEAPDPSVRNVEVPEWTKCSNREKRKEKEKPFYSDSEGESGPTESADSEPESESESESKSSSGSGSGESSSESDNEEEDEEKGGGSESEQSEEEDEKKKKTKKKKASEGHREGSSSEEGSDSSSSSESEVTSESEEEQVEPASWRKKTPPGSKSAPVAKEISLLDLEDFTPPSVQPVSPPMVVSTSLAADLEGLTLTDSSLVPSLLSPVSSIGRQELLHRVAGEGLSVDYAFSRQPFSGDPHMVSLHIYFSNNSETPIKGLHVGTPKLPAGISIQEFPEIESLAPGESTTTVMGINFCDSTQAANFQLCTQTRQFYVSIQPPVGELMAPVFMSENEFKKEQGKLTGMNEITEKLTLPDTCRSDHMVVQKVTATANLGRVPCGTSDEYRFAGRTLTSGSLVLLTLDARAAGAAQLTVNSEKMVIGTMLVKDVIQALTQ.

Positions Met-1 to Gly-30 are disordered. 2 positions are modified to phosphoserine: Ser-272 and Ser-282. Basic and acidic residues predominate over residues Asn-666–Phe-677. Residues Asn-666–Pro-801 are disordered. Positions Ala-691–Glu-700 are enriched in acidic residues. The span at Lys-704–Ser-715 shows a compositional bias: low complexity. 2 stretches are compositionally biased toward acidic residues: residues Ser-716–Glu-726 and Val-775–Val-784.

The protein belongs to the adaptor complexes large subunit family. In terms of assembly, adaptor protein complex 3 (AP-3) is a heterotetramer composed of two large adaptins (delta-type subunit AP3D1 and beta-type subunit AP3B1 or AP3B2), a medium adaptin (mu-type subunit AP3M1 or AP3M2) and a small adaptin (sigma-type subunit APS1 or AP3S2). AP-3 associates with the BLOC-1 complex.

The protein resides in the cytoplasmic vesicle. Its subcellular location is the clathrin-coated vesicle membrane. The protein localises to the golgi apparatus. Its function is as follows. Subunit of non-clathrin- and clathrin-associated adaptor protein complex 3 (AP-3) that plays a role in protein sorting in the late-Golgi/trans-Golgi network (TGN) and/or endosomes. The AP complexes mediate both the recruitment of clathrin to membranes and the recognition of sorting signals within the cytosolic tails of transmembrane cargo molecules. AP-3 appears to be involved in the sorting of a subset of transmembrane proteins targeted to lysosomes and lysosome-related organelles. In concert with the BLOC-1 complex, AP-3 is required to target cargos into vesicles assembled at cell bodies for delivery into neurites and nerve terminals. This is AP-3 complex subunit beta-2 (Ap3b2) from Mus musculus (Mouse).